Consider the following 596-residue polypeptide: Chaperonin 60 subunit beta 2, chloroplastic (596 aa).

Residues 1 to 50 constitute a chloroplast transit peptide; the sequence is MASTFTATSSLGSLLAPNAIKLSSATSISSSSFGRRHNVCVRRSRPAIVC. A phosphoserine mark is found at Ser-97 and Ser-474. Residues 388 to 489 are a coiled coil; sequence TQEAVNKRVV…KDTLENDEEK (102 aa).

The protein belongs to the chaperonin (HSP60) family. Part of the Cpn60 complex composed of 7 alpha and 7 beta subunits. Can also form a complex composed of 14 beta subunits only. Both complexes show ATPase activity. The Cpn60 complex interacts with the Cpn10 complex. Interacts with RAB during heat stress.

It localises to the plastid. It is found in the chloroplast stroma. Functionally, involved in protein assisted folding. This chain is Chaperonin 60 subunit beta 2, chloroplastic (CPN60B2), found in Arabidopsis thaliana (Mouse-ear cress).